The primary structure comprises 341 residues: Long-chain acyl-[acyl-carrier-protein] reductase (341 aa).

Belongs to the short-chain dehydrogenases/reductases (SDR) family. A divalent metal cation serves as cofactor.

It catalyses the reaction a long-chain fatty aldehyde + holo-[ACP] + NADP(+) = a long-chain fatty acyl-[ACP] + NADPH + H(+). It carries out the reaction a long-chain fatty aldehyde + holo-[ACP] + NAD(+) = a long-chain fatty acyl-[ACP] + NADH + H(+). Its function is as follows. Catalyzes the NADP-dependent reduction of long-chain acyl-ACP to the corresponding fatty aldehyde. Involved in the biosynthesis of alkanes, mainly heptadecane and pentadecane, by producing the fatty aldehydes used by aldehyde decarbonylase. The polypeptide is Long-chain acyl-[acyl-carrier-protein] reductase (Synechococcus elongatus (strain ATCC 33912 / PCC 7942 / FACHB-805) (Anacystis nidulans R2)).